Consider the following 158-residue polypeptide: FUN14 domain-containing protein 1 (158 aa).

The YXXL motif lies at 21 to 24 (YEVV). 2 helical membrane-spanning segments follow: residues 51 to 70 (YSVTTQLVMGGLTGWCAGYL) and 77 to 98 (IAATAVGGGFLLLQIANHSGYV).

It belongs to the FUN14 family.

The protein resides in the mitochondrion outer membrane. Its function is as follows. Acts as an activator of hypoxia-induced mitophagy, an important mechanism for mitochondrial quality control. The sequence is that of FUN14 domain-containing protein 1 (fundc1) from Tetraodon nigroviridis (Spotted green pufferfish).